The sequence spans 519 residues: Golgi-associated kinase 1B (519 aa).

Residues 1–37 are Cytoplasmic-facing; the sequence is MTCPDKPGQLINWFICSLCVPRVRKLWSSRRPRTRRN. A helical; Signal-anchor for type II membrane protein transmembrane segment spans residues 38-55; that stretch reads LLLGTACAIYLGFLVSQV. Residues 56–519 are Extracellular-facing; the sequence is GRASLQHGQA…HGVKVLPMNE (464 aa). A disordered region spans residues 62 to 103; the sequence is HGQAAEKGPHRSRDTAEPSFPEIPLDGTLAPPESQGNGSTLQ. Residues 68 to 77 are compositionally biased toward basic and acidic residues; it reads KGPHRSRDTA. N-linked (GlcNAc...) asparagine glycosylation occurs at asparagine 289.

It belongs to the GASK family.

It is found in the golgi apparatus membrane. This Homo sapiens (Human) protein is Golgi-associated kinase 1B.